We begin with the raw amino-acid sequence, 111 residues long: Large ribosomal subunit protein P2 (111 aa).

Residues 63–84 show a composition bias toward low complexity; the sequence is ASMPTGGAPAAAAGGAATAPAA. Residues 63-111 are disordered; it reads ASMPTGGAPAAAAGGAATAPAAEAKEAKKEEKKEESEEEDEDMGFGLFD. Positions 85–97 are enriched in basic and acidic residues; the sequence is EAKEAKKEEKKEE. At Ser-98 the chain carries Phosphoserine.

In terms of assembly, part of the ribosomal stalk of the large ribosomal subunit; P1 and P2 exist as dimers which assemble on the P0 scaffold.

Plays an important role in the elongation step of protein synthesis. This Artemia salina (Brine shrimp) protein is Large ribosomal subunit protein P2.